The chain runs to 345 residues: Probable aldo-keto reductase 3 (345 aa).

The active-site Proton donor is Tyr-63. Substrate is bound at residue His-130. 209-219 (SPLGRGFFASG) is a binding site for NADP(+).

The protein belongs to the aldo/keto reductase family.

The polypeptide is Probable aldo-keto reductase 3 (Arabidopsis thaliana (Mouse-ear cress)).